The primary structure comprises 646 residues: EF-hand calcium-binding domain-containing protein 6 (646 aa).

6 consecutive EF-hand domains span residues 1 to 27 (FLET…FDIP), 28 to 63 (LTPR…NYSP), 109 to 144 (DCYQ…CGCS), 214 to 249 (SSQL…FCHK), 321 to 356 (SHYH…NVQI), and 357 to 392 (LTDE…ERAA). Thr-29 bears the Phosphothreonine mark. The tract at residues 390-452 (RAATPTATGD…TTAIPGTPPL (63 aa)) is disordered. The segment covering 432–446 (KPQSHPCTAASTTAI) has biased composition (polar residues). Ser-435 carries the phosphoserine modification. Residues Thr-439 and Thr-449 each carry the phosphothreonine modification. An interaction with PARK7 region spans residues 448-646 (GTPPLQNCDP…YNDFLRAFLQ (199 aa)). 4 consecutive EF-hand domains span residues 468-503 (GCWR…FNLD), 504-539 (ISKE…LLKA), 579-614 (HCWR…YSIN), and 615-646 (LSEE…AFLQ). The interval 552 to 646 (NAHKMKDSGA…YNDFLRAFLQ (95 aa)) is interaction with AR.

Microtubule inner protein component of sperm flagellar doublet microtubules. Binds PARK7. Part of a ternary complex containing PARK7, EFCAB6/DJBP and AR.

The protein localises to the nucleus. The protein resides in the cytoplasm. Its subcellular location is the cytoskeleton. It localises to the flagellum axoneme. Functionally, negatively regulates the androgen receptor by recruiting histone deacetylase complex, and protein DJ-1 antagonizes this inhibition by abrogation of this complex. Microtubule inner protein (MIP) part of the dynein-decorated doublet microtubules (DMTs) in cilia axoneme, which is required for motile cilia beating. The chain is EF-hand calcium-binding domain-containing protein 6 (EFCAB6) from Macaca fascicularis (Crab-eating macaque).